The following is a 91-amino-acid chain: Acyl carrier protein AsbD (91 aa).

Residues 4-82 enclose the Carrier domain; the sequence is EALKNAVLKI…SLLDFMEELQ (79 aa). Position 40 is an O-(pantetheine 4'-phosphoryl)serine (Ser-40).

This sequence belongs to the acyl carrier protein (ACP) family. In terms of processing, activated by the transfer of a 4'-phosphopantetheine group from CoA to Ser-40.

Its pathway is siderophore biosynthesis; petrobactin biosynthesis. Involved in the biosynthesis of petrobactin, a catecholate siderophore that functions in both iron acquisition and virulence. Aryl-carrier protein that activates 3,4-dihydroxybenzoate (3,4-DHBA) prior to its incorporation into petrobactin. The sequence is that of Acyl carrier protein AsbD from Bacillus anthracis.